Reading from the N-terminus, the 184-residue chain is UPF0397 protein SAS2570 (184 aa).

5 consecutive transmembrane segments (helical) span residues Val11 to Pro31, Ala44 to Val64, Ala77 to Leu97, Met111 to Pro131, and Gln148 to Leu168.

The protein belongs to the UPF0397 family.

It is found in the cell membrane. This chain is UPF0397 protein SAS2570, found in Staphylococcus aureus (strain MSSA476).